We begin with the raw amino-acid sequence, 315 residues long: Acetyl-coenzyme A carboxylase carboxyl transferase subunit alpha (315 aa).

Positions 40 to 293 constitute a CoA carboxyltransferase C-terminal domain; that stretch reads LQDKSKTLTE…RAELSSQLAM (254 aa).

Belongs to the AccA family. Acetyl-CoA carboxylase is a heterohexamer composed of biotin carboxyl carrier protein (AccB), biotin carboxylase (AccC) and two subunits each of ACCase subunit alpha (AccA) and ACCase subunit beta (AccD).

It localises to the cytoplasm. It catalyses the reaction N(6)-carboxybiotinyl-L-lysyl-[protein] + acetyl-CoA = N(6)-biotinyl-L-lysyl-[protein] + malonyl-CoA. Its pathway is lipid metabolism; malonyl-CoA biosynthesis; malonyl-CoA from acetyl-CoA: step 1/1. Functionally, component of the acetyl coenzyme A carboxylase (ACC) complex. First, biotin carboxylase catalyzes the carboxylation of biotin on its carrier protein (BCCP) and then the CO(2) group is transferred by the carboxyltransferase to acetyl-CoA to form malonyl-CoA. The sequence is that of Acetyl-coenzyme A carboxylase carboxyl transferase subunit alpha from Pseudomonas fluorescens (strain Pf0-1).